Consider the following 453-residue polypeptide: Tol-Pal system protein TolB (453 aa).

Positions 1–34 (MYLIIKKTHKLPHWLQKVSLSIMLIIFLWKPALL) are cleaved as a signal peptide.

Belongs to the TolB family. The Tol-Pal system is composed of five core proteins: the inner membrane proteins TolA, TolQ and TolR, the periplasmic protein TolB and the outer membrane protein Pal. They form a network linking the inner and outer membranes and the peptidoglycan layer.

Its subcellular location is the periplasm. Part of the Tol-Pal system, which plays a role in outer membrane invagination during cell division and is important for maintaining outer membrane integrity. TolB occupies a key intermediary position in the Tol-Pal system because it communicates directly with both membrane-embedded components, Pal in the outer membrane and TolA in the inner membrane. This is Tol-Pal system protein TolB from Blochmanniella pennsylvanica (strain BPEN).